Here is a 28-residue protein sequence, read N- to C-terminus: Cliotide T21 (28 aa).

A cross-link (cyclopeptide (Asp-Asn)) is located at residues 1–28 (DLQCAETCVHSPCIGPCYCKHGLICYRN). 3 disulfide bridges follow: Cys-4-Cys-17, Cys-8-Cys-19, and Cys-13-Cys-25.

Post-translationally, contains 3 disulfide bonds. This is a cyclic peptide. As to expression, expressed in root nodules but not in seed.

In terms of biological role, probably participates in a plant defense mechanism. Not active against Gram-negative bacterium E.coli ATCC 700926 or Gram-positive bacterium S.aureus ATCC 12600 up to a concentration of 100 uM under low-salt conditions. The protein is Cliotide T21 of Clitoria ternatea (Butterfly pea).